Here is a 131-residue protein sequence, read N- to C-terminus: Photosystem II extrinsic protein U (131 aa).

A signal peptide spans 1-28 (MKFISRLLVACSLLIGLMGFLGADLAQA). The propeptide occupies 29–36 (LTPNPILA).

Belongs to the PsbU family. As to quaternary structure, PSII is composed of 1 copy each of membrane proteins PsbA, PsbB, PsbC, PsbD, PsbE, PsbF, PsbH, PsbI, PsbJ, PsbK, PsbL, PsbM, PsbT, PsbX, PsbY, PsbZ, Psb30/Ycf12, peripheral proteins PsbO, CyanoQ (PsbQ), PsbU, PsbV and a large number of cofactors. It forms dimeric complexes.

Its subcellular location is the cellular thylakoid membrane. In terms of biological role, one of the extrinsic, lumenal subunits of photosystem II (PSII). PSII is a light-driven water plastoquinone oxidoreductase, using light energy to abstract electrons from H(2)O, generating a proton gradient subsequently used for ATP formation. The extrinsic proteins stabilize the structure of photosystem II oxygen-evolving complex (OEC), the ion environment of oxygen evolution and protect the OEC against heat-induced inactivation. May modulate the Cl(-) requirement for oxygen evolution. This is Photosystem II extrinsic protein U from Synechocystis sp. (strain ATCC 27184 / PCC 6803 / Kazusa).